Here is a 406-residue protein sequence, read N- to C-terminus: Proteasome-activating nucleotidase 1 (406 aa).

Residues 13 to 72 (YDKDSASQQEKITALQERLEVLETQNEEMRDKLLDTNAENNKYQQKLERLTHENKKLKQS) adopt a coiled-coil conformation. ATP contacts are provided by residues 194-199 (GTGKTM) and His-333. The docks into pockets in the proteasome alpha-ring to cause gate opening stretch occupies residues 404–406 (AFA).

The protein belongs to the AAA ATPase family. Homododecamer, in a proposed two stacked hexameric ring configuration, but may also form homohexamer. The hexameric complex has likely a two-ring architecture resembling a top hat that caps the 20S proteasome core at one or both ends. Upon ATP-binding, the C-terminus of PAN probably interacts with the alpha-rings of the proteasome core by binding to the intersubunit pockets. Interacts with SAMP1-MoaE conjugate in vitro, but does not bind to SAMP1 or MoaE alone. Interacts with NcsA.

Its subcellular location is the cytoplasm. ATPase activity is inhibited by EDTA in vitro. In terms of biological role, ATPase which is responsible for recognizing, binding, unfolding and translocation of substrate proteins into the archaeal 20S proteasome core particle. Is essential for opening the gate of the 20S proteasome via an interaction with its C-terminus, thereby allowing substrate entry and access to the site of proteolysis. Thus, the C-terminus of the proteasomal ATPase functions like a 'key in a lock' to induce gate opening and therefore regulate proteolysis. Unfolding activity requires energy from ATP hydrolysis, whereas ATP binding alone promotes ATPase-20S proteasome association which triggers gate opening, and supports translocation of unfolded substrates. Is also able to cleave other nucleoside triphosphates including GTP and TTP, but the rate of hydrolysis is 4- to 5-fold slower than for ATP. The sequence is that of Proteasome-activating nucleotidase 1 from Haloferax volcanii (strain ATCC 29605 / DSM 3757 / JCM 8879 / NBRC 14742 / NCIMB 2012 / VKM B-1768 / DS2) (Halobacterium volcanii).